We begin with the raw amino-acid sequence, 381 residues long: Probable 26S proteasome regulatory subunit rpn9 (381 aa).

Residues 177-343 enclose the PCI domain; sequence QYYRHCLLYL…QIVTISSVQS (167 aa).

It belongs to the proteasome subunit S11 family.

Functionally, acts as a regulatory subunit of the 26S proteasome which is involved in the ATP-dependent degradation of ubiquitinated proteins. The polypeptide is Probable 26S proteasome regulatory subunit rpn9 (rpn9) (Schizosaccharomyces pombe (strain 972 / ATCC 24843) (Fission yeast)).